We begin with the raw amino-acid sequence, 179 residues long: Dynein light chain Tctex-type 5 (179 aa).

The protein belongs to the dynein light chain Tctex-type family. Interacts with ZMYND10.

This chain is Dynein light chain Tctex-type 5 (DYNLT5), found in Homo sapiens (Human).